A 156-amino-acid chain; its full sequence is Phosphopantetheine adenylyltransferase (156 aa).

Threonine 9 lines the substrate pocket. ATP-binding positions include 9 to 10 (TF) and histidine 17. 3 residues coordinate substrate: lysine 41, leucine 73, and arginine 87. ATP-binding positions include 88 to 90 (GVR), glutamate 98, and 123 to 129 (WAFVSST).

The protein belongs to the bacterial CoaD family. As to quaternary structure, homohexamer. The cofactor is Mg(2+).

It is found in the cytoplasm. The catalysed reaction is (R)-4'-phosphopantetheine + ATP + H(+) = 3'-dephospho-CoA + diphosphate. Its pathway is cofactor biosynthesis; coenzyme A biosynthesis; CoA from (R)-pantothenate: step 4/5. Its function is as follows. Reversibly transfers an adenylyl group from ATP to 4'-phosphopantetheine, yielding dephospho-CoA (dPCoA) and pyrophosphate. The sequence is that of Phosphopantetheine adenylyltransferase from Haemophilus influenzae (strain ATCC 51907 / DSM 11121 / KW20 / Rd).